The following is a 386-amino-acid chain: Sulfate adenylyltransferase (386 aa).

Belongs to the sulfate adenylyltransferase family.

It carries out the reaction sulfate + ATP + H(+) = adenosine 5'-phosphosulfate + diphosphate. It participates in sulfur metabolism; hydrogen sulfide biosynthesis; sulfite from sulfate: step 1/3. The sequence is that of Sulfate adenylyltransferase from Persephonella marina (strain DSM 14350 / EX-H1).